Reading from the N-terminus, the 254-residue chain is MTSTDNDNILYEYPLQERMRTYLRLEHGFEQLKASRVCFDEQAEPFFNALFAVTELLERCDIRTELTKDLELDKQRLQKWEEHPDVDRDALQRTISEIEHCINTLQDIPKYLRQLKDDALLTSIRQRFSQPGMSGLFELPQLHLWLSQSAEEKQQQCERWSQTLALVELAITLKLTLLREQSVFAPIQLQNGFLQESSEQLLAMLRIKVPRSAKIYPVISGHRQRFTVRFMPLPGESKETSLHDIEFELARCSP.

The protein belongs to the ZapD family. Interacts with FtsZ.

It localises to the cytoplasm. In terms of biological role, cell division factor that enhances FtsZ-ring assembly. Directly interacts with FtsZ and promotes bundling of FtsZ protofilaments, with a reduction in FtsZ GTPase activity. The protein is Cell division protein ZapD of Idiomarina loihiensis (strain ATCC BAA-735 / DSM 15497 / L2-TR).